The primary structure comprises 109 residues: Cell division suppressor protein YneA (109 aa).

Residues Ser-39 to Ile-90 form the LysM domain.

It belongs to the YneA family.

The protein localises to the cytoplasm. Functionally, inhibits cell division during the SOS response. Affects a later stage of the cell division protein assembly, after the assembly of the Z ring, by probably suppressing recruitment of FtsL and/or DivIC to the division machinery. In Listeria monocytogenes serotype 4b (strain CLIP80459), this protein is Cell division suppressor protein YneA.